The primary structure comprises 761 residues: Ribonucleoside-diphosphate reductase 1 subunit alpha (761 aa).

The region spanning 5-95 is the ATP-cone domain; it reads LLVTKRDGRT…IFHLRKKAFG (91 aa). ATP-binding positions include Lys9, 15–21, Thr55, and Lys91; that span reads ERINLDK. A GDP-binding site is contributed by Thr209. Cys225 and Cys462 form a disulfide bridge. Residues 232–234, Arg262, and Arg269 each bind dTTP; that span reads DSL. Asn437 is a GDP binding site. Asn437 serves as the catalytic Proton acceptor. Cys439 serves as the catalytic Cysteine radical intermediate. Residues Glu441 and 623 to 625 contribute to the GDP site; that span reads ETS. Glu441 serves as the catalytic Proton acceptor.

This sequence belongs to the ribonucleoside diphosphate reductase large chain family. Tetramer of two alpha (R1) and two beta (R2) subunits. The B1 protein is a dimer of alpha subunits. A radical transfer pathway occurs between 'Tyr-122' of R2 and R1.

It carries out the reaction a 2'-deoxyribonucleoside 5'-diphosphate + [thioredoxin]-disulfide + H2O = a ribonucleoside 5'-diphosphate + [thioredoxin]-dithiol. With respect to regulation, under complex allosteric control mediated by deoxynucleoside triphosphates and ATP binding to separate specificity and activation sites on the alpha subunit. The type of nucleotide bound at the specificity site determines substrate preference. It seems probable that ATP makes the enzyme reduce CDP and UDP, dGTP favors ADP reduction and dTTP favors GDP reduction. Stimulated by ATP and inhibited by dATP binding to the activity site. Provides the precursors necessary for DNA synthesis. Catalyzes the biosynthesis of deoxyribonucleotides from the corresponding ribonucleotides. R1 contains the binding sites for both substrates and allosteric effectors and carries out the actual reduction of the ribonucleotide. This chain is Ribonucleoside-diphosphate reductase 1 subunit alpha (nrdA), found in Salmonella typhimurium (strain LT2 / SGSC1412 / ATCC 700720).